Here is an 87-residue protein sequence, read N- to C-terminus: Small ribosomal subunit protein bS20 (87 aa).

The segment covering 1–11 has biased composition (basic residues); it reads MAHHKSAIKRI. Positions 1–26 are disordered; it reads MAHHKSAIKRIKQNEKRNARNRHQKS.

This sequence belongs to the bacterial ribosomal protein bS20 family.

In terms of biological role, binds directly to 16S ribosomal RNA. The polypeptide is Small ribosomal subunit protein bS20 (Trichlorobacter lovleyi (strain ATCC BAA-1151 / DSM 17278 / SZ) (Geobacter lovleyi)).